The following is a 641-amino-acid chain: Epithelial sodium channel subunit beta (641 aa).

Residues 1–50 lie on the Cytoplasmic side of the membrane; the sequence is MHLKKYLLKGLHRLQKGPGYSYKELLVWYCNNTNTHGPKRIICEGPKKKA. The chain crosses the membrane as a helical span at residues 51 to 71; that stretch reads MWFLITLLFTSLVCWQWGVFI. Over 72-533 the chain is Extracellular; sequence RTYLSWEVSV…GGQFGFWMGG (462 aa). Intrachain disulfides connect Cys-98/Cys-273, Cys-185/Cys-190, Cys-197/Cys-204, Cys-250/Cys-257, Cys-362/Cys-449, Cys-387/Cys-445, Cys-391/Cys-441, Cys-400/Cys-427, and Cys-402/Cys-416. N-linked (GlcNAc...) asparagine glycosylation is present at Asn-141. Residue Asn-261 is glycosylated (N-linked (GlcNAc...) asparagine). The helical transmembrane segment at 534–554 threads the bilayer; sequence SVLCLIEFGEILIDFVWITII. Residues 555-641 lie on the Cytoplasmic side of the membrane; the sequence is KLVAFAKSLR…IESDSEGDAI (87 aa). A disordered region spans residues 593-624; that stretch reads PDVARPGPDPGTYPDEQTLPIPGTPPPNYDSL. The PY motif; recruits WW domain-containing proteins and is thereby required for ubiquitination and inhibition of the channel by NEDD4 and NEDD4L motif lies at 617 to 621; that stretch reads PPPNY. A phosphoserine mark is found at Ser-634 and Ser-636.

The protein belongs to the amiloride-sensitive sodium channel (TC 1.A.6) family. SCNN1B subfamily. Component of the heterotrimeric epithelial sodium channel (ENaC) composed of an alpha/SCNN1A, a beta/SCNN1B and a gamma/SCNN1G subunit. An additional delta/SCNN1D subunit can replace the alpha/SCNN1A subunit to form an alternative channel with specific properties. Interacts with WWP1 (via WW domains). Interacts with WWP2 (via WW domains); inhibits the channel. Interacts with the full-length immature form of PCSK9 (pro-PCSK9). Interacts (N-glycosylated) with BPIFA1; the interaction is direct and inhibits the proteolytic processing of SCNN1A and SCNN1G and the activation of ENaC. Post-translationally, ubiquitinated. Can be ubiquitinated at multiple sites and undergo monoubiquitination and polyubiquitination. Ubiquitination by NEDD4 or NEDD4L inhibits the ENaC channel through endocytosis, intracellular retention and degradation of its individual subunits. However, some studies could not confirm the ubiquitination of this subunit of the ENaC. Phosphorylated on serine and threonine residues. Aldosterone and insulin increase the basal level of phosphorylation. In terms of processing, N-glycosylated. N-glycosylation is required for interaction with BPIFA1.

It localises to the apical cell membrane. The protein localises to the cytoplasmic vesicle membrane. It catalyses the reaction Na(+)(in) = Na(+)(out). Its activity is regulated as follows. Originally identified and characterized by its inhibition by the diuretic drug amiloride. Its function is as follows. This is one of the three pore-forming subunits of the heterotrimeric epithelial sodium channel (ENaC), a critical regulator of sodium balance and fluid homeostasis. ENaC operates in epithelial tissues, where it mediates the electrodiffusion of sodium ions from extracellular fluid through the apical membrane of cells, with water following osmotically. It plays a key role in maintaining sodium homeostasis through electrogenic sodium reabsorption in the kidneys. Additionally, ENaC is essential for airway surface liquid homeostasis, which is crucial for proper mucus clearance. The sequence is that of Epithelial sodium channel subunit beta from Canis lupus familiaris (Dog).